The sequence spans 790 residues: MPAAIVHSADPSSTSILVEVEGMKCAGCVAAVERRLQQTAGVEAVSVNLITRLAKVDYDAALIEDPTVLTTEITGLGFRAQLRQDDNPLTLPIAEIPPLQQQRLQLAIAAFLLIVSSWGHLGHWLDHPLPGTDQLWFHALLATWALLGPGRSILQAGWQGLRCGAPNMNSLVLLGTGSAYLASLVALLWPQLGWVCFFDEPVMLLGFILLGRTLEEQARFRSQAALQNLLALQPETTQLLTAPSSIAPQDLLEAPAQIWPVAQLRAGDYVQVLPGDRIPVDGCIVAGQSTLDTAMLTGEPLPQPCQVGDRVCAGTLNLSHRLVIRAEQTGSQTRLAAIVRCVAEAQQRKAPVQRFADAIAGRFVYGVCAIAALTFGFWATLGSRWWPQVLQQPLPGLLIHAPHHGMEMAHPHSHSPLLLALTLAISVLVVACPCALGLATPTAILVATGLAAEQGILVRGGDVLEQLARIKHFVFDKTGTLTQGQFELIEIQPLADVDPDRLLQWAAALEADSRHPLATALQTAAQAANLAPIAASDRQQVPGLGVSGTCDGRSLRLGNPTWVQVATAKLPTGSAAATSIWLADDQQLLACFWLQDQPRPEAAEVVQALRSRGATVQILSGDRQTTAVALAQQLGLESETVVAEVLPEDKAAAIAALQSQGDAVAMIGDGINDAPALATAAVGISLAAGSDIAQDSAGLLLSRDRLDSVLVAWNLSQMGLRTIRQNLTWALGYNVVMLPLAAGAFLPAYGLALTPAIAGACMAVSSLAVVSNSLLLRYWFRRSLNHSVSV.

The Cytoplasmic segment spans residues 1-105; sequence MPAAIVHSAD…IPPLQQQRLQ (105 aa). One can recognise an HMA domain in the interval 14 to 81; the sequence is TSILVEVEGM…EITGLGFRAQ (68 aa). Cu(+)-binding residues include Cys-25 and Cys-28. Residues 106–127 form a helical membrane-spanning segment; the sequence is LAIAAFLLIVSSWGHLGHWLDH. Over 128–136 the chain is Extracellular; the sequence is PLPGTDQLW. The chain crosses the membrane as a helical span at residues 137 to 156; sequence FHALLATWALLGPGRSILQA. At 157-163 the chain is on the cytoplasmic side; sequence GWQGLRC. Residues 164-184 traverse the membrane as a helical segment; it reads GAPNMNSLVLLGTGSAYLASL. The Extracellular segment spans residues 185–198; sequence VALLWPQLGWVCFF. The helical transmembrane segment at 199–219 threads the bilayer; it reads DEPVMLLGFILLGRTLEEQAR. Over 220 to 358 the chain is Cytoplasmic; it reads FRSQAALQNL…KAPVQRFADA (139 aa). A helical membrane pass occupies residues 359–381; sequence IAGRFVYGVCAIAALTFGFWATL. The Extracellular segment spans residues 382 to 420; sequence GSRWWPQVLQQPLPGLLIHAPHHGMEMAHPHSHSPLLLA. A helical membrane pass occupies residues 421-438; sequence LTLAISVLVVACPCALGL. The Cytoplasmic segment spans residues 439–723; that stretch reads ATPTAILVAT…NLSQMGLRTI (285 aa). Asp-476 (4-aspartylphosphate intermediate) is an active-site residue. Positions 669 and 673 each coordinate Mg(2+). The helical transmembrane segment at 724-743 threads the bilayer; that stretch reads RQNLTWALGYNVVMLPLAAG. At 744–755 the chain is on the extracellular side; the sequence is AFLPAYGLALTP. Residues 756 to 774 traverse the membrane as a helical segment; it reads AIAGACMAVSSLAVVSNSL. Topologically, residues 775 to 790 are cytoplasmic; sequence LLRYWFRRSLNHSVSV.

The protein belongs to the cation transport ATPase (P-type) (TC 3.A.3) family. Type IB subfamily.

The protein resides in the cell membrane. The enzyme catalyses Cu(+)(in) + ATP + H2O = Cu(+)(out) + ADP + phosphate + H(+). Functionally, involved in copper transport. In Synechococcus elongatus (strain ATCC 33912 / PCC 7942 / FACHB-805) (Anacystis nidulans R2), this protein is Probable copper-transporting ATPase SynA (synA).